Here is a 217-residue protein sequence, read N- to C-terminus: Small ribosomal subunit protein uS3 (217 aa).

The KH type-2 domain occupies 38–106 (IRNFIKKELA…QVHINIIEIK (69 aa)).

Belongs to the universal ribosomal protein uS3 family. In terms of assembly, part of the 30S ribosomal subunit. Forms a tight complex with proteins S10 and S14.

Its function is as follows. Binds the lower part of the 30S subunit head. Binds mRNA in the 70S ribosome, positioning it for translation. The protein is Small ribosomal subunit protein uS3 of Streptococcus suis (strain 98HAH33).